A 186-amino-acid polypeptide reads, in one-letter code: MLDQTNYTPRLKAAYANSVRAAMKEEFGYKNDMQIPRLDKIVLNMGVGEAVKDTKKVKTAAEELSMIAGQKAVVTHAKKSIAGFRVREQMPLGCKVTLRGDRMYEFLDRLITIALPRVRDFRGVKGNSFDGRGNYAMGLKEQFVFPEINFDKVDEVLGMDIIICTTAKTDAEAKALLKQFNMPFIS.

The protein belongs to the universal ribosomal protein uL5 family. As to quaternary structure, part of the 50S ribosomal subunit; part of the 5S rRNA/L5/L18/L25 subcomplex. Contacts the 5S rRNA and the P site tRNA. Forms a bridge to the 30S subunit in the 70S ribosome.

Functionally, this is one of the proteins that bind and probably mediate the attachment of the 5S RNA into the large ribosomal subunit, where it forms part of the central protuberance. In the 70S ribosome it contacts protein S13 of the 30S subunit (bridge B1b), connecting the 2 subunits; this bridge is implicated in subunit movement. Contacts the P site tRNA; the 5S rRNA and some of its associated proteins might help stabilize positioning of ribosome-bound tRNAs. This is Large ribosomal subunit protein uL5 from Cereibacter sphaeroides (strain ATCC 17023 / DSM 158 / JCM 6121 / CCUG 31486 / LMG 2827 / NBRC 12203 / NCIMB 8253 / ATH 2.4.1.) (Rhodobacter sphaeroides).